A 20-amino-acid chain; its full sequence is Tetracycline resistance leader peptide (20 aa).

The protein is Tetracycline resistance leader peptide (tetL) of Bacillus cereus.